The chain runs to 783 residues: Tricorn protease-interacting factor F2 (783 aa).

Residues Glu107 and 236 to 240 each bind substrate; that span reads GAMEN. His271 contacts Zn(2+). Catalysis depends on Glu272, which acts as the Proton acceptor. Zn(2+)-binding residues include His275 and Glu294.

It belongs to the peptidase M1 family. In terms of assembly, monomer. Part of the Tricorn proteolytic complex. Zn(2+) is required as a cofactor.

Its subcellular location is the cytoplasm. Its function is as follows. Proteases F1, F2 and F3 degrade oligopeptides produced by Tricorn (themselves probably produced by the proteasome), yielding free amino acids. The sequence is that of Tricorn protease-interacting factor F2 (trf2) from Thermoplasma acidophilum (strain ATCC 25905 / DSM 1728 / JCM 9062 / NBRC 15155 / AMRC-C165).